Here is a 798-residue protein sequence, read N- to C-terminus: Protocadherin beta-13 (798 aa).

A signal peptide spans 1 to 28 (MEASGKLICRQRQVLFSFLLLGLSLAGA). The Extracellular segment spans residues 29–690 (AEPRSYSVVE…AQADLLTVYL (662 aa)). 5 consecutive Cadherin domains span residues 36–134 (VVEE…SPVF), 139–243 (MLVK…APEF), 248–348 (YRVQ…APEV), 353–451 (FTSP…APAF), and 456–561 (YTLF…SPFV). Asn-418 and Asn-436 each carry an N-linked (GlcNAc...) asparagine glycan. N-linked (GlcNAc...) asparagine glycosylation occurs at Asn-567. One can recognise a Cadherin 6 domain in the interval 568–671 (GSAPCTELVP…LVDGFSQPYL (104 aa)). The helical transmembrane segment at 691 to 711 (VVALASVSSLFLFSVLLFVAV) threads the bilayer. The Cytoplasmic segment spans residues 712 to 798 (RLCRRSRAAS…FPNNFGFNIQ (87 aa)).

It is found in the cell membrane. Functionally, potential calcium-dependent cell-adhesion protein. May be involved in the establishment and maintenance of specific neuronal connections in the brain. In Homo sapiens (Human), this protein is Protocadherin beta-13 (PCDHB13).